Reading from the N-terminus, the 418-residue chain is Gamma-glutamyl phosphate reductase (418 aa).

It belongs to the gamma-glutamyl phosphate reductase family.

The protein localises to the cytoplasm. The catalysed reaction is L-glutamate 5-semialdehyde + phosphate + NADP(+) = L-glutamyl 5-phosphate + NADPH + H(+). It functions in the pathway amino-acid biosynthesis; L-proline biosynthesis; L-glutamate 5-semialdehyde from L-glutamate: step 2/2. Catalyzes the NADPH-dependent reduction of L-glutamate 5-phosphate into L-glutamate 5-semialdehyde and phosphate. The product spontaneously undergoes cyclization to form 1-pyrroline-5-carboxylate. In Halothermothrix orenii (strain H 168 / OCM 544 / DSM 9562), this protein is Gamma-glutamyl phosphate reductase.